Reading from the N-terminus, the 297-residue chain is uncharacterized protein (297 aa).

Glu-46 is an active-site residue.

This sequence belongs to the PhzF family. As to quaternary structure, homodimer and homotetramer.

This is an uncharacterized protein from Escherichia coli (strain K12).